We begin with the raw amino-acid sequence, 412 residues long: NF-kappa-B essential modulator (412 aa).

Residues Met1–Pro48 are disordered. The segment at Met1–Val197 is required for interaction with and ubiquitination by MARCHF2. 2 positions are modified to phosphoserine; by IKKB: Ser31 and Ser43. An interaction with CHUK/IKBKB region spans residues Glu44–Lys111. The stretch at Glu49–Arg345 forms a coiled coil. The residue at position 68 (Ser68) is a Phosphoserine. Ser85 carries the post-translational modification Phosphoserine; by ATM. Residues Lys111, Lys139, Lys143, Lys226, and Lys246 each participate in a glycyl lysine isopeptide (Lys-Gly) (interchain with G-Cter in ubiquitin) cross-link. Positions Leu150–Gly250 are interaction with TANK. The segment at Asp242–Ser343 is ubiquitin-binding (UBAN). The self-association stretch occupies residues Lys246–Gln358. The segment at Lys249–Glu412 is required for interaction with TNFAIP3. A linear polyubiquitin-binding, does not bind to 'Lys-63'-linked polyubiquitin region spans residues Gly250–Gly339. Residue Lys270 forms a Glycyl lysine isopeptide (Lys-Gly) (interchain with G-Cter in SUMO); alternate linkage. Lys270 is covalently cross-linked (Glycyl lysine isopeptide (Lys-Gly) (interchain with G-Cter in ubiquitin); alternate). Glycyl lysine isopeptide (Lys-Gly) (interchain with G-Cter in ubiquitin) cross-links involve residues Lys276, Lys278, Lys285, and Lys295. Lys302 participates in a covalent cross-link: Glycyl lysine isopeptide (Lys-Gly) (interchain with G-Cter in SUMO); alternate. Lys302 participates in a covalent cross-link: Glycyl lysine isopeptide (Lys-Gly) (interchain with G-Cter in ubiquitin); alternate. Glycyl lysine isopeptide (Lys-Gly) (interchain with G-Cter in ubiquitin) cross-links involve residues Lys314, Lys318, and Lys319. The leucine-zipper stretch occupies residues Leu315–Leu336. Ser369 carries the post-translational modification Phosphoserine; by IKKB. The interaction with CYLD stretch occupies residues Ser375–Glu412. Residue Ser380 is modified to Phosphoserine. A CCHC NOA-type zinc finger spans residues Pro382 to Glu412. Position 390 (Cys390) interacts with Zn(2+). Lys392 participates in a covalent cross-link: Glycyl lysine isopeptide (Lys-Gly) (interchain with G-Cter in ubiquitin). Residues Cys393, His406, and Cys410 each coordinate Zn(2+).

Homodimer; disulfide-linked. Component of the I-kappa-B-kinase (IKK) core complex consisting of CHUK, IKBKB and IKBKG; probably four alpha/CHUK-beta/IKBKB dimers are associated with four gamma/IKBKG subunits. The IKK core complex seems to associate with regulatory or adapter proteins to form a IKK-signalosome holo-complex. The IKK complex associates with TERF2IP/RAP1, leading to promote IKK-mediated phosphorylation of RELA/p65. Part of a complex composed of NCOA2, NCOA3, CHUK/IKKA, IKBKB, IKBKG and CREBBP. Interacts with COPS3, CYLD, NALP2, TRPC4AP and PIDD1. Interacts with ATM; the complex is exported from the nucleus. Interacts with TRAF6. Interacts with IKBKE. Interacts with TANK; the interaction is enhanced by IKBKE and TBK1. Part of a ternary complex consisting of TANK, IKBKB and IKBKG. Interacts with ZFAND5. Interacts with RIPK2. Interacts with TNIP1 and TNFAIP3; TNIP1 facilitates the TNFAIP3-mediated de-ubiquitination of IKBKG. Interacts with TNFAIP3; the interaction is induced by TNF stimulation and by polyubiquitin. Binds (via UBAN region) polyubiquitin; binds both 'Lys-63'-linked and linear polyubiquitin, with higher affinity for linear ubiquitin. Interacts with NLRP10. Interacts with TANK; this interaction increases in response to DNA damage. Interacts with USP10; this interaction increases in response to DNA damage. Interacts with ZC3H12A; this interaction increases in response to DNA damage. Interacts with IFIT5; the interaction synergizes the recruitment of IKK to MAP3K7 and enhances IKK phosphorylation. Interacts with TRIM29; this interaction induces IKBKG/NEMO ubiquitination and proteolytic degradation. Interacts with TRIM13; this interaction leads to IKBKG/NEMO ubiquitination. Interacts with ARFIP2. Interacts with RIPK1. Interacts with (ubiquitinated) BCL10; interaction with polyubiquitinated BCL10 via both 'Lys-63'-linked and linear ubiquitin is required for TCR-induced NF-kappa-B activation. Interacts with MARCHF2; during the late stages of macrophage viral and bacterial infection; the interaction leads to ubiquitination and degradation of IKBKG/NEMO. In terms of processing, phosphorylation at Ser-68 attenuates aminoterminal homodimerization. Polyubiquitinated on Lys-278 via 'Lys-63'-linked ubiquitin; the ubiquitination is mediated downstream of NOD2 and RIPK2 and probably plays a role in signaling by facilitating interactions with ubiquitin domain-containing proteins and activates the NF-kappa-B pathway. Polyubiquitinated on Lys-278 and Lys-302 through 'Lys-63'-linked ubiquitin; the ubiquitination is mediated by BCL10, MALT1 and TRAF6 and probably plays a role in signaling by facilitating interactions with ubiquitin domain-containing proteins and activates the NF-kappa-B pathway. Monoubiquitinated on Lys-270 and Lys-302; promotes nuclear export. Polyubiquitinated through 'Lys-27' by TRIM23; involved in antiviral innate and inflammatory responses. Linear polyubiquitinated on Lys-111, Lys-143, Lys-226, Lys-246, Lys-270, Lys-278, Lys-285, Lys-295, Lys-302 and Lys-319; the head-to-tail polyubiquitination is mediated by the LUBAC complex and plays a key role in NF-kappa-B activation. Deubiquitinated by USP10 in a TANK-dependent and -independent manner, leading to the negative regulation of NF-kappa-B signaling upon DNA damage. Ubiquitinated at Lys-319 by MARCHF2 following bacterial and viral infection which leads to its degradation. Polyubiquitinated via 'Lys-29'-linked ubiquitin; leading to lysosomal degradation. Post-translationally, sumoylated on Lys-270 and Lys-302 with SUMO1; the modification results in phosphorylation of Ser-85 by ATM leading to a replacement of the sumoylation by mono-ubiquitination on these residues. In terms of processing, neddylated by TRIM40, resulting in stabilization of NFKBIA and down-regulation of NF-kappa-B activity.

Its subcellular location is the cytoplasm. It localises to the nucleus. Its function is as follows. Regulatory subunit of the IKK core complex which phosphorylates inhibitors of NF-kappa-B thus leading to the dissociation of the inhibitor/NF-kappa-B complex and ultimately the degradation of the inhibitor. Its binding to scaffolding polyubiquitin plays a key role in IKK activation by multiple signaling receptor pathways. Can recognize and bind both 'Lys-63'-linked and linear polyubiquitin upon cell stimulation, with a much highr affinity for linear polyubiquitin. Could be implicated in NF-kappa-B-mediated protection from cytokine toxicity. Essential for viral activation of IRF3. Involved in TLR3- and IFIH1-mediated antiviral innate response; this function requires 'Lys-27'-linked polyubiquitination. This chain is NF-kappa-B essential modulator (Ikbkg), found in Mus musculus (Mouse).